We begin with the raw amino-acid sequence, 110 residues long: uncharacterized protein (110 aa).

The protein resides in the plastid. It is found in the chloroplast. This is an uncharacterized protein from Auxenochlorella pyrenoidosa (Freshwater green alga).